The primary structure comprises 729 residues: Fatty acid oxidation complex subunit alpha (729 aa).

Residues 1-189 (MLYKGDTLYL…KIGLVDGVVK (189 aa)) are enoyl-CoA hydratase/isomerase. Asp-296 is a binding site for substrate. The 3-hydroxyacyl-CoA dehydrogenase stretch occupies residues 311 to 729 (ETPKQAAVLG…ARPVGSLKTA (419 aa)). NAD(+) contacts are provided by residues Met-324, Asp-343, 400-402 (VVE), Lys-407, and Ser-429. His-450 acts as the For 3-hydroxyacyl-CoA dehydrogenase activity in catalysis. Asn-453 is an NAD(+) binding site. Substrate is bound by residues Asn-500 and Tyr-660. The disordered stretch occupies residues 708–729 (RHNEPYYPPVEPARPVGSLKTA).

It in the N-terminal section; belongs to the enoyl-CoA hydratase/isomerase family. In the C-terminal section; belongs to the 3-hydroxyacyl-CoA dehydrogenase family. Heterotetramer of two alpha chains (FadB) and two beta chains (FadA).

The catalysed reaction is a (3S)-3-hydroxyacyl-CoA + NAD(+) = a 3-oxoacyl-CoA + NADH + H(+). The enzyme catalyses a (3S)-3-hydroxyacyl-CoA = a (2E)-enoyl-CoA + H2O. It catalyses the reaction a 4-saturated-(3S)-3-hydroxyacyl-CoA = a (3E)-enoyl-CoA + H2O. It carries out the reaction (3S)-3-hydroxybutanoyl-CoA = (3R)-3-hydroxybutanoyl-CoA. The catalysed reaction is a (3Z)-enoyl-CoA = a 4-saturated (2E)-enoyl-CoA. The enzyme catalyses a (3E)-enoyl-CoA = a 4-saturated (2E)-enoyl-CoA. Its pathway is lipid metabolism; fatty acid beta-oxidation. In terms of biological role, involved in the aerobic and anaerobic degradation of long-chain fatty acids via beta-oxidation cycle. Catalyzes the formation of 3-oxoacyl-CoA from enoyl-CoA via L-3-hydroxyacyl-CoA. It can also use D-3-hydroxyacyl-CoA and cis-3-enoyl-CoA as substrate. In Salmonella agona (strain SL483), this protein is Fatty acid oxidation complex subunit alpha.